Here is a 393-residue protein sequence, read N- to C-terminus: Formate-dependent phosphoribosylglycinamide formyltransferase (393 aa).

Residues 22-23 and Glu82 contribute to the N(1)-(5-phospho-beta-D-ribosyl)glycinamide site; that span reads EL. Residues Arg114, Lys155, 160-165, 195-198, and Glu203 each bind ATP; these read SSGKGQ and EGFI. The ATP-grasp domain maps to 119–308; the sequence is RLAAEELKLP…QFALHARAIL (190 aa). 2 residues coordinate Mg(2+): Glu267 and Glu279. N(1)-(5-phospho-beta-D-ribosyl)glycinamide contacts are provided by residues Asp286, Lys356, and 363 to 364; that span reads RR.

This sequence belongs to the PurK/PurT family. In terms of assembly, homodimer.

The enzyme catalyses N(1)-(5-phospho-beta-D-ribosyl)glycinamide + formate + ATP = N(2)-formyl-N(1)-(5-phospho-beta-D-ribosyl)glycinamide + ADP + phosphate + H(+). Its pathway is purine metabolism; IMP biosynthesis via de novo pathway; N(2)-formyl-N(1)-(5-phospho-D-ribosyl)glycinamide from N(1)-(5-phospho-D-ribosyl)glycinamide (formate route): step 1/1. In terms of biological role, involved in the de novo purine biosynthesis. Catalyzes the transfer of formate to 5-phospho-ribosyl-glycinamide (GAR), producing 5-phospho-ribosyl-N-formylglycinamide (FGAR). Formate is provided by PurU via hydrolysis of 10-formyl-tetrahydrofolate. This is Formate-dependent phosphoribosylglycinamide formyltransferase from Pseudomonas savastanoi pv. phaseolicola (strain 1448A / Race 6) (Pseudomonas syringae pv. phaseolicola (strain 1448A / Race 6)).